A 278-amino-acid polypeptide reads, in one-letter code: Protein NIF3 homolog (278 aa).

It belongs to the GTP cyclohydrolase I type 2/NIF3 family.

This Schizosaccharomyces pombe (strain 972 / ATCC 24843) (Fission yeast) protein is Protein NIF3 homolog.